A 121-amino-acid chain; its full sequence is Large ribosomal subunit protein bL12 (121 aa).

The protein belongs to the bacterial ribosomal protein bL12 family. In terms of assembly, homodimer. Part of the ribosomal stalk of the 50S ribosomal subunit. Forms a multimeric L10(L12)X complex, where L10 forms an elongated spine to which 2 to 4 L12 dimers bind in a sequential fashion. Binds GTP-bound translation factors.

In terms of biological role, forms part of the ribosomal stalk which helps the ribosome interact with GTP-bound translation factors. Is thus essential for accurate translation. The chain is Large ribosomal subunit protein bL12 from Clostridium perfringens (strain 13 / Type A).